Reading from the N-terminus, the 250-residue chain is Vacuolar protein sorting-associated protein 22 homolog 1 (250 aa).

The stretch at 35 to 55 (MKEQLSTFRSQLEEFARKHKN) forms a coiled coil.

Belongs to the SNF8 family. As to quaternary structure, component of the endosomal sorting complex required for transport II (ESCRT-II), composed of VPS22, VPS25 and VPS36.

It localises to the endosome. Its function is as follows. Component of the endosomal sorting complex required for transport II (ESCRT-II), which is required for multivesicular body (MVB) formation and sorting of endosomal cargo proteins into MVBs. The ESCRT-II complex is probably involved in the recruitment of the ESCRT-III complex. The polypeptide is Vacuolar protein sorting-associated protein 22 homolog 1 (VP22-1) (Arabidopsis thaliana (Mouse-ear cress)).